The sequence spans 124 residues: Fluoride-specific ion channel FluC (124 aa).

The next 4 membrane-spanning stretches (helical) occupy residues 5-25 (ILAV…AGTW), 37-57 (ATLA…GLFL), 69-89 (GLIV…LDTL), and 99-119 (LALG…WAGL). Na(+) contacts are provided by Gly76 and Thr79.

Belongs to the fluoride channel Fluc/FEX (TC 1.A.43) family.

It is found in the cell inner membrane. It carries out the reaction fluoride(in) = fluoride(out). Na(+) is not transported, but it plays an essential structural role and its presence is essential for fluoride channel function. Fluoride-specific ion channel. Important for reducing fluoride concentration in the cell, thus reducing its toxicity. The polypeptide is Fluoride-specific ion channel FluC (Pseudomonas syringae pv. tomato (strain ATCC BAA-871 / DC3000)).